The chain runs to 1177 residues: MAQTTLDDWAKDPVDPEIRAHVHSLITALGGIGDDGTYSLGDDALLCLKDLRKWLKFGDGQLNRRDVARCMAEANLVKGDLLEILAKISPKAIEDKWRHKIAVAALELLVPLTWPFEIDPIEATVNHHRHGPYIQLAQIGYKRAILQFDRDRTLQTAVKIALPSMAVPLRERTPRDEGIIRIALYFIRNIAMLSPPTSAPMDIDEAEVSRSATIDTFHEQDIFQVLLSVASSIGEDFVAQDVIVLEILFFLLKGIDAEKLFMEDKKLGTKNADELKNLMQKEKAMLAGYARNAPTRHNRFGTMIWVKRDDEKVTTISGQDVLGKAQASMQKMDQTKKWNKPRRPGKKVDGEQEREEFDLPVALTVSARKHIKAFVEEFLDSSFNPLFLHLRKAIERETERVEIRHSRQFFYLASWFLRAECARRRTMKERAADPKDPAVLTAEDESYGLVAEVMNQETFILLNRFMQKSQDEKAWQDLNAGMKCFTQILLTVHEMSESALEDDQEIAENIQNRIFYEESTHDRVVMILRSYNGQGFGYLDAVTELSHVFLRMLERYAKQNVDLQVKSKRRARKIKKKVAETHGANGDEEGQVSDTEDIQQAQRTVSERKFDFQRFAAKFVNQSSVDTFVAFARYFSDLDTEQLKRIHRFFHRVAFKMELGVLLCRVDILQLFTKMMKGPGGLDPESPAYKEWDEFVRHFFRQVVKKVQERPELVVEMLFSKIPATLFFLDHGYDREITKSTPRAPAELEVKPGMEVPEQIGVAVGVLINQAKSDALHWVRDILISAAEERKAWEGAEEARKALAAAERPAGEEVAENTEEESPKPPSILVKPDSEERRLAMFKDNKLRLLMTLVGFSRLGEAHDPDATWIIPSAFTSTDLEFAIDLLRKYEFDPPTYEDGKGPEDLIRNKASAARRSTRRVDFDDDDEEAENAVEEDHGEYRAGKATERKPDGERKKLKRRQRVGTPVELDDEEKDRRAEARRKKELEKFAKQKSTEFVHDSDEEDDDDKDMEFFRREEALRTEIMKAFGKSLTAGSTETATSKKRKAEDSTSRTKRRKTPPKRKAQPFADSDDSDEDVQDAATPSSRAPSLSARDMIHDESEVEDEATDTPLSSQHANGVHESDEDTTTGATASITVKSQDVVMADDDDEEDEATPVARRPMARKRGAFIVDSDSE.

Disordered stretches follow at residues methionine 332–glutamate 353, lysine 576–isoleucine 598, alanine 802–valine 830, aspartate 893–methionine 1012, and alanine 1028–glutamate 1177. Over residues glycine 586–aspartate 597 the composition is skewed to acidic residues. Positions aspartate 893 to arginine 908 are enriched in basic and acidic residues. Residues phenylalanine 923–valine 934 show a composition bias toward acidic residues. Basic and acidic residues-rich tracts occupy residues glutamate 935–arginine 955 and lysine 975–aspartate 1001. The span at serine 1002–aspartate 1011 shows a compositional bias: acidic residues. A compositionally biased stretch (basic residues) spans arginine 1054–alanine 1066. A compositionally biased stretch (acidic residues) spans aspartate 1071–glutamine 1080. The span at threonine 1129–serine 1140 shows a compositional bias: polar residues. Over residues methionine 1145–alanine 1155 the composition is skewed to acidic residues.

The protein belongs to the timeless family. Component of the fork protection complex (FPC) consisting of TOF1 and CSM3.

Its subcellular location is the nucleus. Its function is as follows. Forms a fork protection complex (FPC) with CSM3 and which is required for chromosome segregation during meiosis and DNA damage repair. FPC coordinates leading and lagging strand synthesis and moves with the replication fork. FPC stabilizes replication forks in a configuration that is recognized by replication checkpoint sensors. The chain is Topoisomerase 1-associated factor 1 (TOF1) from Phaeosphaeria nodorum (strain SN15 / ATCC MYA-4574 / FGSC 10173) (Glume blotch fungus).